Reading from the N-terminus, the 354-residue chain is UDP-3-O-acylglucosamine N-acyltransferase (354 aa).

H245 acts as the Proton acceptor in catalysis.

It belongs to the transferase hexapeptide repeat family. LpxD subfamily. In terms of assembly, homotrimer.

The catalysed reaction is a UDP-3-O-[(3R)-3-hydroxyacyl]-alpha-D-glucosamine + a (3R)-hydroxyacyl-[ACP] = a UDP-2-N,3-O-bis[(3R)-3-hydroxyacyl]-alpha-D-glucosamine + holo-[ACP] + H(+). It functions in the pathway bacterial outer membrane biogenesis; LPS lipid A biosynthesis. In terms of biological role, catalyzes the N-acylation of UDP-3-O-acylglucosamine using 3-hydroxyacyl-ACP as the acyl donor. Is involved in the biosynthesis of lipid A, a phosphorylated glycolipid that anchors the lipopolysaccharide to the outer membrane of the cell. In Anaeromyxobacter dehalogenans (strain 2CP-C), this protein is UDP-3-O-acylglucosamine N-acyltransferase.